The primary structure comprises 415 residues: Histidine--tRNA ligase (415 aa).

It belongs to the class-II aminoacyl-tRNA synthetase family. In terms of assembly, homodimer.

Its subcellular location is the cytoplasm. The enzyme catalyses tRNA(His) + L-histidine + ATP = L-histidyl-tRNA(His) + AMP + diphosphate + H(+). The sequence is that of Histidine--tRNA ligase from Clostridium botulinum (strain Okra / Type B1).